Reading from the N-terminus, the 622-residue chain is Cilia- and flagella-associated protein 206 (622 aa).

The interval 568–593 (NTSQVYPLKEASTQSKREGSSRVPRP) is disordered.

It belongs to the CFAP206 family. In terms of tissue distribution, expressed in the sperm, oviduct, lung, nasal cavity, brain ependyma and choroid plexus.

The protein localises to the cytoplasm. It localises to the cytoskeleton. The protein resides in the cilium axoneme. It is found in the cilium basal body. Functionally, essential for sperm motility and is involved in the regulation of the beating frequency of motile cilia on the epithelial cells of the respiratory tract. Required for the establishment of radial spokes in sperm flagella. This Mus musculus (Mouse) protein is Cilia- and flagella-associated protein 206.